Reading from the N-terminus, the 148-residue chain is Lysozyme C (148 aa).

The N-terminal stretch at 1–18 (MKALIVLGLVLLSVMVQG) is a signal peptide. The C-type lysozyme domain maps to 19-148 (KVFERCELAR…VRQYVQGCGV (130 aa)). Cystine bridges form between C24–C146, C48–C134, C83–C99, and C95–C113. Residues E53 and D71 contribute to the active site.

It belongs to the glycosyl hydrolase 22 family. In terms of assembly, monomer.

It carries out the reaction Hydrolysis of (1-&gt;4)-beta-linkages between N-acetylmuramic acid and N-acetyl-D-glucosamine residues in a peptidoglycan and between N-acetyl-D-glucosamine residues in chitodextrins.. Lysozymes have primarily a bacteriolytic function; those in tissues and body fluids are associated with the monocyte-macrophage system and enhance the activity of immunoagents. This Gorilla gorilla gorilla (Western lowland gorilla) protein is Lysozyme C (LYZ).